The sequence spans 226 residues: 7-cyano-7-deazaguanine synthase (226 aa).

10 to 20 (LSGGLDSATAA) contributes to the ATP binding site. Residues cysteine 191, cysteine 199, cysteine 202, and cysteine 205 each coordinate Zn(2+).

It belongs to the QueC family. It depends on Zn(2+) as a cofactor.

It carries out the reaction 7-carboxy-7-deazaguanine + NH4(+) + ATP = 7-cyano-7-deazaguanine + ADP + phosphate + H2O + H(+). The protein operates within purine metabolism; 7-cyano-7-deazaguanine biosynthesis. Catalyzes the ATP-dependent conversion of 7-carboxy-7-deazaguanine (CDG) to 7-cyano-7-deazaguanine (preQ(0)). This is 7-cyano-7-deazaguanine synthase from Parasynechococcus marenigrum (strain WH8102).